Here is a 429-residue protein sequence, read N- to C-terminus: SET domain-containing protein 8 (429 aa).

The 216-residue stretch at 17 to 232 folds into the SET domain; the sequence is KQITIKKIRK…ENEEVTINYG (216 aa).

The protein belongs to the class V-like SAM-binding methyltransferase superfamily.

Its subcellular location is the cytoplasm. The protein localises to the nucleus. This is SET domain-containing protein 8 (set8) from Schizosaccharomyces pombe (strain 972 / ATCC 24843) (Fission yeast).